Reading from the N-terminus, the 118-residue chain is T cell receptor gamma variable 3 (118 aa).

Positions 1–17 (MRWALLVLLAFLSPASQ) are cleaved as a signal peptide. In terms of domain architecture, Ig-like spans 18 to 118 (KSSNLEGRTK…GVYYCATWDR (101 aa)). A disulfide bridge links cysteine 41 with cysteine 113. An N-linked (GlcNAc...) asparagine glycan is attached at asparagine 106.

As to quaternary structure, gamma-delta TR is a heterodimer composed of a gamma and delta chain; disulfide-linked. The gamma-delta TR is associated with the transmembrane signaling CD3 coreceptor proteins following the stoichiometry: a single gamma-delta TR heterodimer associates with one CD3D-CD3E heterodimer, one CD3G-CD3E heterodimer and one CD247 homodimer forming a stable octameric structure. Upon activation, gamma-delta TR complex associates with FCER1G to initiate intracellular signaling.

The protein resides in the cell membrane. Functionally, v region of the variable domain of T cell receptor (TR) gamma chain that participates in the antigen recognition. Gamma-delta TRs recognize a variety of self and foreign non-peptide antigens frequently expressed at the epithelial boundaries between the host and external environment, including endogenous lipids presented by MH-like protein CD1D and phosphoantigens presented by butyrophilin-like molecule BTN3A1. Upon antigen recognition induces rapid, innate-like immune responses involved in pathogen clearance and tissue repair. Binding of gamma-delta TR complex to antigen triggers phosphorylation of immunoreceptor tyrosine-based activation motifs (ITAMs) in the CD3 chains by the LCK and FYN kinases, allowing the recruitment, phosphorylation, and activation of ZAP70 that facilitates phosphorylation of the scaffolding proteins LCP2 and LAT. This lead to the formation of a supramolecular signalosome that recruits the phospholipase PLCG1, resulting in calcium mobilization and ERK activation, ultimately leading to T cell expansion and differentiation into effector cells. Gamma-delta TRs are produced through somatic rearrangement of a limited repertoire of variable (V), diversity (D), and joining (J) genes. The potential diversity of gamma-delta TRs is conferred by the unique ability to rearrange (D) genes in tandem and to utilize all three reading frames. The combinatorial diversity is considerably increased by the sequence exonuclease trimming and random nucleotide (N) region additions which occur during the V-(D)-J rearrangements. The chain is T cell receptor gamma variable 3 from Homo sapiens (Human).